Here is a 122-residue protein sequence, read N- to C-terminus: MPRVIGIDIPDNKRLEISLTYLYGIGRHLSNEIIVKLGLDPNMRAHKLTQDDLARLNGLLTSEYMVEGDLRRQVQNNIKRLISIHSYRGMRHRLGLPVRGQRTKTNSRTRKGRRKTVANKKK.

The disordered stretch occupies residues 95 to 122; the sequence is GLPVRGQRTKTNSRTRKGRRKTVANKKK. Over residues 101–122 the composition is skewed to basic residues; sequence QRTKTNSRTRKGRRKTVANKKK.

The protein belongs to the universal ribosomal protein uS13 family. In terms of assembly, part of the 30S ribosomal subunit. Forms a loose heterodimer with protein S19. Forms two bridges to the 50S subunit in the 70S ribosome.

Functionally, located at the top of the head of the 30S subunit, it contacts several helices of the 16S rRNA. In the 70S ribosome it contacts the 23S rRNA (bridge B1a) and protein L5 of the 50S subunit (bridge B1b), connecting the 2 subunits; these bridges are implicated in subunit movement. Contacts the tRNAs in the A and P-sites. In Protochlamydia amoebophila (strain UWE25), this protein is Small ribosomal subunit protein uS13.